A 320-amino-acid chain; its full sequence is F-box protein At2g02240 (320 aa).

Positions 58–104 (TSPFDVLPEDCISNIISFTSPRDACVAASVSKTFESAVSSDCVWDKF) constitute an F-box domain.

This chain is F-box protein At2g02240, found in Arabidopsis thaliana (Mouse-ear cress).